Consider the following 599-residue polypeptide: UvrABC system protein C (599 aa).

In terms of domain architecture, GIY-YIG spans 15 to 93 (DNPGVYQYYD…IKTLQPRYNI (79 aa)). A UVR domain is found at 207–242 (KDSMKDFKKVMTNLAQNMHFEEAQKIKEKIEILENY).

This sequence belongs to the UvrC family. In terms of assembly, interacts with UvrB in an incision complex.

The protein localises to the cytoplasm. Its function is as follows. The UvrABC repair system catalyzes the recognition and processing of DNA lesions. UvrC both incises the 5' and 3' sides of the lesion. The N-terminal half is responsible for the 3' incision and the C-terminal half is responsible for the 5' incision. The chain is UvrABC system protein C from Flavobacterium psychrophilum (strain ATCC 49511 / DSM 21280 / CIP 103535 / JIP02/86).